Consider the following 147-residue polypeptide: Large ribosomal subunit protein uL13 (147 aa).

This sequence belongs to the universal ribosomal protein uL13 family. As to quaternary structure, part of the 50S ribosomal subunit.

Its function is as follows. This protein is one of the early assembly proteins of the 50S ribosomal subunit, although it is not seen to bind rRNA by itself. It is important during the early stages of 50S assembly. This Ligilactobacillus salivarius (strain UCC118) (Lactobacillus salivarius) protein is Large ribosomal subunit protein uL13.